A 37-amino-acid polypeptide reads, in one-letter code: MKIRASVRPICEKCRLIRRRGRIIVICSNPKHKQRQG.

In terms of assembly, component of the chloroplast large ribosomal subunit (LSU). Mature 70S chloroplast ribosomes of higher plants consist of a small (30S) and a large (50S) subunit. The 30S small subunit contains 1 molecule of ribosomal RNA (16S rRNA) and 24 different proteins. The 50S large subunit contains 3 rRNA molecules (23S, 5S and 4.5S rRNA) and 33 different proteins.

It localises to the plastid. Its subcellular location is the chloroplast. In terms of biological role, component of the chloroplast ribosome (chloro-ribosome), a dedicated translation machinery responsible for the synthesis of chloroplast genome-encoded proteins, including proteins of the transcription and translation machinery and components of the photosynthetic apparatus. The polypeptide is Large ribosomal subunit protein bL36c (rpl36) (Spinacia oleracea (Spinach)).